A 142-amino-acid chain; its full sequence is MRNYDLSPLLRQWIGFDKLASALQTAGESQSFPPYNIEKSDDNHYRITLALAGFRQEDLDIQLEGIRLVVKGTPQQPEKETTWLHQGLVSQAFSLSFTLADNMEVSGATFTNGLLHIDLTRNEPEQIAPQRIAISERPALNS.

In terms of domain architecture, sHSP spans 26-137 (AGESQSFPPY…APQRIAISER (112 aa)).

The protein belongs to the small heat shock protein (HSP20) family. In terms of assembly, homodimer. Forms homomultimers of about 100-150 subunits at optimal growth temperatures. Conformation changes to oligomers at high temperatures or high ionic concentrations. The decrease in size of the multimers is accompanied by an increase in chaperone activity.

The protein resides in the cytoplasm. Functionally, associates with aggregated proteins, together with IbpA, to stabilize and protect them from irreversible denaturation and extensive proteolysis during heat shock and oxidative stress. Aggregated proteins bound to the IbpAB complex are more efficiently refolded and reactivated by the ATP-dependent chaperone systems ClpB and DnaK/DnaJ/GrpE. Its activity is ATP-independent. The protein is Small heat shock protein IbpB of Klebsiella pneumoniae subsp. pneumoniae (strain ATCC 700721 / MGH 78578).